The primary structure comprises 664 residues: Macoilin (664 aa).

4 helical membrane-spanning segments follow: residues 28-48 (TFLY…DFVV), 75-95 (AFSV…LLFI), 120-140 (VCLP…AIRF), and 154-174 (FAAH…KSYV). The segment covering 253-265 (REKGKEKDKDAKK) has biased composition (basic and acidic residues). Residues 253–274 (REKGKEKDKDAKKHNLGINNNN) are disordered. S305 is modified (phosphoserine). Residues 320–348 (KNYKNASGVVNSSPRSHSATNGSIPSSSS) show a composition bias toward polar residues. The tract at residues 320-375 (KNYKNASGVVNSSPRSHSATNGSIPSSSSKNEKKQKCTSKSPSTHKDLMENCIPNN) is disordered. N324 is a glycosylation site (N-linked (GlcNAc...) asparagine). S332 carries the post-translational modification Phosphoserine. N-linked (GlcNAc...) asparagine glycans are attached at residues N340 and N452. Residues 630-664 (TSPLSPVSPHYSSKFVETSPSGLDPNASVYQPLKK) are disordered. Phosphoserine occurs at positions 631 and 634. A glycan (N-linked (GlcNAc...) asparagine) is linked at N655.

The protein belongs to the macoilin family.

Its subcellular location is the rough endoplasmic reticulum membrane. It localises to the nucleus membrane. In terms of biological role, plays a role in the regulation of neuronal activity. The protein is Macoilin (MACO1) of Pan troglodytes (Chimpanzee).